The sequence spans 882 residues: Valine--tRNA ligase (882 aa).

Residues 45–55 carry the 'HIGH' region motif; sequence PNVTGSLHIGH. The 'KMSKS' region motif lies at 525-529; sequence KFSKS. Lysine 528 contacts ATP. Residues 812–881 adopt a coiled-coil conformation; it reads EGLIDVAKEK…VLKKGIQNLA (70 aa).

The protein belongs to the class-I aminoacyl-tRNA synthetase family. ValS type 1 subfamily. Monomer.

The protein resides in the cytoplasm. It carries out the reaction tRNA(Val) + L-valine + ATP = L-valyl-tRNA(Val) + AMP + diphosphate. Catalyzes the attachment of valine to tRNA(Val). As ValRS can inadvertently accommodate and process structurally similar amino acids such as threonine, to avoid such errors, it has a 'posttransfer' editing activity that hydrolyzes mischarged Thr-tRNA(Val) in a tRNA-dependent manner. This is Valine--tRNA ligase from Leptospira interrogans serogroup Icterohaemorrhagiae serovar Lai (strain 56601).